A 303-amino-acid polypeptide reads, in one-letter code: MTRTPAAPEKHNRDSASRYKSGSKISTLFAEELVERSAIAGFGRKDLVVFDNACGTGAISSALHRALGDEKTRTWKLTCGDVSEAMVEVSKQKMIEEGWQNAEVEVVDAQNTGLLSDHYTHVFSAFGKMLGTQGNGIMLTSISAFNLFPDDKAAMEECFRVLQSGGTLAVSTWCSTVWATLIQSAIASIPGDLPTPTTEDIFGLYNKNWADESRVRAQFQQAGFTDINVTSVKKEYTVPVQELAEACKISLPHITRKFWTQEQRDSYEAEVPKAVLRILEEEQRGIGLGAMKAEAIIATARKP.

Belongs to the class I-like SAM-binding methyltransferase superfamily. Requires S-adenosyl-L-methionine as cofactor.

Its function is as follows. Non-reducing polyketide synthase; part of the gene cluster that mediates the biosynthesis of the bicoumarin kotanin. The non-reducing polyketide synthase ktnS first catalyzes the formation of the pentaketidic 4,7-dihydroxy-5-methylcoumarin from acetyl coenzyme A and 4 malonyl coenzyme A molecules. Further O-methylation by ktnB leads to the formation of 7-demethylsiderin. Then, an oxidative phenol coupling catalyzed by the cytochrome P450 monooxygenase ktnC forms the 8,8'-dimer P-orlandin via dimerization the monomeric precursor, 7-demethylsiderin. P-orlandin is subsequently O-methylated in a stepwise fashion to demethylkotanin and kotanin. The function of ktnA within the pathway has not been determined yet. This chain is Methyltransferase ktnA, found in Aspergillus niger (strain ATCC MYA-4892 / CBS 513.88 / FGSC A1513).